A 114-amino-acid chain; its full sequence is MIEFYFNKKRRLITPNDFNYVFKSPNVIRCKEITILGRLNLLSFSRLGISVSRKNVKYAYQRNKIKRLIRENFRIIQHRLVSSDFVVIVNSSSMQISFKLLAKKLENLWSYYYQ.

This sequence belongs to the RnpA family. In terms of assembly, consists of a catalytic RNA component (M1 or rnpB) and a protein subunit.

It catalyses the reaction Endonucleolytic cleavage of RNA, removing 5'-extranucleotides from tRNA precursor.. RNaseP catalyzes the removal of the 5'-leader sequence from pre-tRNA to produce the mature 5'-terminus. It can also cleave other RNA substrates such as 4.5S RNA. The protein component plays an auxiliary but essential role in vivo by binding to the 5'-leader sequence and broadening the substrate specificity of the ribozyme. In Buchnera aphidicola subsp. Baizongia pistaciae (strain Bp), this protein is Ribonuclease P protein component.